We begin with the raw amino-acid sequence, 465 residues long: Protein unc-93 homolog A (465 aa).

The next 5 helical transmembrane spans lie at 8–28 (VLVV…LQSL), 40–60 (VISL…LPPI), 71–91 (IVVS…PGWA), 96–118 (TSAI…LTIS), and 140–160 (IFFF…SLIF). N-linked (GlcNAc...) asparagine glycans are attached at residues Asn183 and Asn189. Residues 200 to 220 (TLLGCYIGVGLLAIIFVAVFL) traverse the membrane as a helical segment. Asn237 carries N-linked (GlcNAc...) asparagine glycosylation. The next 5 helical transmembrane spans lie at 256–276 (LLLL…LSGE), 281–301 (YVTC…FAAS), 319–339 (IALF…LLYW), 343–363 (PDQL…DAVW), and 410–427 (IYIA…YLYV).

This sequence belongs to the unc-93 family.

The protein localises to the membrane. The sequence is that of Protein unc-93 homolog A (unc93a) from Danio rerio (Zebrafish).